The sequence spans 506 residues: 26S proteasome non-ATPase regulatory subunit 5 (506 aa).

This sequence belongs to the proteasome subunit S5B/HSM3 family. Interacts with PI31; this interaction is increased by PI31 ADP-ribosylation. Interacts with Rpt2.

In terms of biological role, acts as a chaperone during the assembly of the 26S proteasome. The polypeptide is 26S proteasome non-ATPase regulatory subunit 5 (Drosophila melanogaster (Fruit fly)).